A 32-amino-acid chain; its full sequence is Coenzyme PQQ synthesis protein A (32 aa).

Residues 16–20 (EINMY) constitute a cross-link (pyrroloquinoline quinone (Glu-Tyr)).

Belongs to the PqqA family.

It participates in cofactor biosynthesis; pyrroloquinoline quinone biosynthesis. Required for coenzyme pyrroloquinoline quinone (PQQ) biosynthesis. PQQ is probably formed by cross-linking a specific glutamate to a specific tyrosine residue and excising these residues from the peptide. This Dinoroseobacter shibae (strain DSM 16493 / NCIMB 14021 / DFL 12) protein is Coenzyme PQQ synthesis protein A.